The sequence spans 264 residues: Indole-3-glycerol phosphate synthase (264 aa).

This sequence belongs to the TrpC family.

It catalyses the reaction 1-(2-carboxyphenylamino)-1-deoxy-D-ribulose 5-phosphate + H(+) = (1S,2R)-1-C-(indol-3-yl)glycerol 3-phosphate + CO2 + H2O. It functions in the pathway amino-acid biosynthesis; L-tryptophan biosynthesis; L-tryptophan from chorismate: step 4/5. The sequence is that of Indole-3-glycerol phosphate synthase from Stenotrophomonas maltophilia (strain R551-3).